The sequence spans 419 residues: UDP-N-acetylglucosamine 1-carboxyvinyltransferase 2 (419 aa).

22-23 (KN) is a binding site for phosphoenolpyruvate. Arg92 provides a ligand contact to UDP-N-acetyl-alpha-D-glucosamine. Cys116 acts as the Proton donor in catalysis. The residue at position 116 (Cys116) is a 2-(S-cysteinyl)pyruvic acid O-phosphothioketal. UDP-N-acetyl-alpha-D-glucosamine-binding positions include 121–125 (RPIDL), Asp306, and Val328.

This sequence belongs to the EPSP synthase family. MurA subfamily.

It is found in the cytoplasm. It carries out the reaction phosphoenolpyruvate + UDP-N-acetyl-alpha-D-glucosamine = UDP-N-acetyl-3-O-(1-carboxyvinyl)-alpha-D-glucosamine + phosphate. It participates in cell wall biogenesis; peptidoglycan biosynthesis. In terms of biological role, cell wall formation. Adds enolpyruvyl to UDP-N-acetylglucosamine. This chain is UDP-N-acetylglucosamine 1-carboxyvinyltransferase 2, found in Carboxydothermus hydrogenoformans (strain ATCC BAA-161 / DSM 6008 / Z-2901).